We begin with the raw amino-acid sequence, 629 residues long: (-)-alpha-pinene synthase, chloroplastic (629 aa).

Residues 1-48 constitute a chloroplast transit peptide; the sequence is MSPVSVISLPSDLCLPTSFIDRSGRELIPLHITIPNVAMRRQGKLMTR. Mg(2+) is bound by residues Asp-380, Asp-384, and Asp-532. Positions 380–384 match the DDXXD motif motif; that stretch reads DDMYD. Ser-540 contacts K(+).

Belongs to the terpene synthase family. Tpsd subfamily. The cofactor is Mg(2+). Requires Mn(2+) as cofactor. K(+) is required as a cofactor.

It localises to the plastid. The protein resides in the chloroplast. The enzyme catalyses (2E)-geranyl diphosphate = (1S,5S)-alpha-pinene + diphosphate. The protein operates within terpene metabolism; oleoresin biosynthesis. Involved in defensive oleoresin formation in conifers in response to insect attack or other injury. Involved in monoterpene (C10) olefins biosynthesis. Produces mainly (-)-alpha-pinene (79%) and lesser amounts of (-)-beta-pinene (4.2%), nearly racemic mixtures of camphene (2.8% (+)/2.2% (-)) and limonene (2.4% (+)/3.7% (-)), as well as small amounts of (+)-alpha-pinene (3.3%) and (+)-beta-pinene (2.4%). In Pinus taeda (Loblolly pine), this protein is (-)-alpha-pinene synthase, chloroplastic (PT1).